Reading from the N-terminus, the 438-residue chain is Keratin, type I cytoskeletal 13 (438 aa).

The segment at 1 to 95 (MSCRFQSSSM…SVDGGLLSGN (95 aa)) is head. Arg-27 and Arg-35 each carry omega-N-methylarginine. The tract at residues 96-131 (EKITMQNLNDRLASYLEKVRALEAANADLEVKIRDW) is coil. The IF rod domain maps to 96–408 (EKITMQNLND…SLLEGQDAKM (313 aa)). The linker 1 stretch occupies residues 132 to 150 (HLKQSPTSPERDYSAYYKT). Residues 151–242 (IEELRIKILE…KNHEEEMKEF (92 aa)) form a coil 1B region. Residues 243-265 (SNQAVGQVNVEMDATPGIDLTRV) form a linker 12 region. The tract at residues 266-404 (LAEMREQYEA…ATYRSLLEGQ (139 aa)) is coil 2. Residues 405–438 (DAKMTGFNTGGNSTTTSNTSTSPSTSGRPDFRKY) form a tail region. The segment at 408-438 (MTGFNTGGNSTTTSNTSTSPSTSGRPDFRKY) is disordered. A compositionally biased stretch (low complexity) spans 409–431 (TGFNTGGNSTTTSNTSTSPSTSG).

It belongs to the intermediate filament family. In terms of assembly, heterotetramer of two type I and two type II keratins. Post-translationally, O-glycosylated; glycans consist of single N-acetylglucosamine residues.

Its function is as follows. Type 1 keratin. Maintains postnatal tongue mucosal cell homeostasis and tissue organization in response to mechanical stress, potentially via regulation of the G1/S phase cyclins CCNE1 and CCNE2. The chain is Keratin, type I cytoskeletal 13 from Rattus norvegicus (Rat).